An 80-amino-acid polypeptide reads, in one-letter code: Exodeoxyribonuclease 7 small subunit (80 aa).

The protein belongs to the XseB family. As to quaternary structure, heterooligomer composed of large and small subunits.

Its subcellular location is the cytoplasm. It catalyses the reaction Exonucleolytic cleavage in either 5'- to 3'- or 3'- to 5'-direction to yield nucleoside 5'-phosphates.. Its function is as follows. Bidirectionally degrades single-stranded DNA into large acid-insoluble oligonucleotides, which are then degraded further into small acid-soluble oligonucleotides. In Escherichia coli O6:K15:H31 (strain 536 / UPEC), this protein is Exodeoxyribonuclease 7 small subunit.